Here is a 93-residue protein sequence, read N- to C-terminus: Progonadoliberin-2 (93 aa).

The first 24 residues, 1–24 (MACQRHLLFLLLVLFAVSTQLSHG), serve as a signal peptide directing secretion. Residue Q25 is modified to Pyrrolidone carboxylic acid. Glycine amide is present on G34.

It belongs to the GnRH family. As to expression, midbrain and hindbrain.

The protein localises to the secreted. Its function is as follows. Stimulates the secretion of gonadotropins. The sequence is that of Progonadoliberin-2 (gnrh2) from Aquarana catesbeiana (American bullfrog).